Consider the following 89-residue polypeptide: Small ribosomal subunit protein bS20 (89 aa).

It belongs to the bacterial ribosomal protein bS20 family.

Functionally, binds directly to 16S ribosomal RNA. The sequence is that of Small ribosomal subunit protein bS20 from Syntrophus aciditrophicus (strain SB).